A 355-amino-acid polypeptide reads, in one-letter code: Blue-sensitive opsin P467 (355 aa).

Over 1–36 (MNGTEGINFYVPLSNKTGLVRSPFEYPQYYLADPWK) the chain is Extracellular. 2 N-linked (GlcNAc...) asparagine glycosylation sites follow: N2 and N15. The helical transmembrane segment at 37–61 (FKVLSFYMFFLIAAGMPLNGLTLFV) threads the bilayer. The Cytoplasmic portion of the chain corresponds to 62 to 73 (TFQHKKLRQPLN). A helical transmembrane segment spans residues 74–98 (YILVNLAAANLVTVCCGFTVTFYAS). At 99–113 (WYAYFVFGPIGCAIE) the chain is on the extracellular side. A disulfide bond links C110 and C187. Residues 114–133 (GFFATIGGQVALWSLVVLAI) form a helical membrane-spanning segment. Topologically, residues 134–152 (ERYIVICKPMGNFRFSATH) are cytoplasmic. The helical transmembrane segment at 153-176 (AIMGIAFTWFMALACAGPPLFGWS) threads the bilayer. The Extracellular segment spans residues 177–202 (RFIPEGMQCSCGPDYYTLNPDFHNES). The N-linked (GlcNAc...) asparagine glycan is linked to N200. The helical transmembrane segment at 203–230 (YVIYMFIVHFTVPMVVIFFSYGRLVCKV) threads the bilayer. Residues 231 to 252 (REAAAQQQESATTQKAEKEVTR) are Cytoplasmic-facing. A helical membrane pass occupies residues 253 to 276 (MVILMVLGFLLAWTPYAATAIWIF). The Extracellular segment spans residues 277–284 (TNRGAAFS). Residues 285-309 (VTFMTIPAFFSKSSSIYNPIIYVLL) form a helical membrane-spanning segment. Position 296 is an N6-(retinylidene)lysine (K296). Topologically, residues 310-355 (NKQFRNCMVTTICCGKNPFGDEDVSSSVSQSKTEVSSVSSSQVAPA) are cytoplasmic. Residues 333–355 (VSSSVSQSKTEVSSVSSSQVAPA) are disordered. Residues 334-355 (SSSVSQSKTEVSSVSSSQVAPA) show a composition bias toward low complexity.

The protein belongs to the G-protein coupled receptor 1 family. Opsin subfamily. Post-translationally, phosphorylated on some or all of the serine and threonine residues present in the C-terminal region. In this lizard the color pigments are found in the rod-shaped photoreceptor cells which have been derived from ancestral cone-like photoreceptors.

It is found in the membrane. Functionally, visual pigments are the light-absorbing molecules that mediate vision. They consist of an apoprotein, opsin, covalently linked to cis-retinal. This is Blue-sensitive opsin P467 from Gekko gecko (Tokay gecko).